We begin with the raw amino-acid sequence, 184 residues long: Threonylcarbamoyl-AMP synthase (184 aa).

A YrdC-like domain is found at 1 to 184 (MNNLENIVEQ…IFTQHIFRQG (184 aa)).

This sequence belongs to the SUA5 family. TsaC subfamily.

Its subcellular location is the cytoplasm. The catalysed reaction is L-threonine + hydrogencarbonate + ATP = L-threonylcarbamoyladenylate + diphosphate + H2O. In terms of biological role, required for the formation of a threonylcarbamoyl group on adenosine at position 37 (t(6)A37) in tRNAs that read codons beginning with adenine. Catalyzes the conversion of L-threonine, HCO(3)(-)/CO(2) and ATP to give threonylcarbamoyl-AMP (TC-AMP) as the acyladenylate intermediate, with the release of diphosphate. The protein is Threonylcarbamoyl-AMP synthase of Actinobacillus pleuropneumoniae serotype 5b (strain L20).